A 503-amino-acid polypeptide reads, in one-letter code: Protein O-glucosyltransferase 3 (503 aa).

The N-terminal stretch at 1-19 (MQALPLGLQLALLVAAGAG) is a signal peptide. The Filamin repeat unit spans residues 19–129 (GARVSAPRSL…VAHSPYILKG (111 aa)). Residues asparagine 56 and asparagine 302 are each glycosylated (N-linked (GlcNAc...) asparagine). A Prevents secretion from ER motif is present at residues 500-503 (REEL).

It belongs to the KDELC family.

It is found in the endoplasmic reticulum lumen. The catalysed reaction is L-seryl-[EGF-like domain protein] + UDP-alpha-D-glucose = 3-O-(beta-D-glucosyl)-L-seryl-[EGF-like domain protein] + UDP + H(+). It catalyses the reaction L-seryl-[EGF-like domain protein] + UDP-alpha-D-xylose = 3-O-(beta-D-xylosyl)-L-seryl-[EGF-like domain protein] + UDP + H(+). The protein operates within protein modification; protein glycosylation. In terms of biological role, protein glucosyltransferase that catalyzes the transfer of glucose from UDP-glucose to a serine residue within the consensus sequence peptide C-X-N-T-X-G-S-F-X-C. Can also catalyze the transfer of xylose from UDP-xylose but less efficiently. Specifically targets extracellular EGF repeats of proteins such as NOTCH1, NOTCH3, FBN1, FBN2 and LTBP1. May regulate the transport of NOTCH1 and NOTCH3 to the plasma membrane and thereby the Notch signaling pathway. The protein is Protein O-glucosyltransferase 3 (Poglut3) of Mus musculus (Mouse).